Consider the following 195-residue polypeptide: Interferon tau-8 (195 aa).

A signal peptide spans 1-23 (MAFVLSLLMALVLVSYGPGGSLG). Cystine bridges form between Cys24-Cys122 and Cys52-Cys162.

Belongs to the alpha/beta interferon family. IFN-alphaII subfamily. As to expression, constitutively and exclusively expressed in the mononuclear cells of the extraembryonic trophectoderm.

It is found in the secreted. Its function is as follows. Paracrine hormone primarily responsible for maternal recognition of pregnancy. Interacts with endometrial receptors, probably type I interferon receptors, and blocks estrogen receptor expression, preventing the estrogen-induced increase in oxytocin receptor expression in the endometrium. This results in the suppression of the pulsatile endometrial release of the luteolytic hormone prostaglandin F2-alpha, hindering the regression of the corpus luteum (luteolysis) and therefore a return to ovarian cyclicity. This, and a possible direct effect of IFN-tau on prostaglandin synthesis, leads in turn to continued ovarian progesterone secretion, which stimulates the secretion by the endometrium of the nutrients required for the growth of the conceptus. In summary, displays particularly high antiviral and antiproliferative potency concurrently with particular weak cytotoxicity, high antiluteolytic activity and immunomodulatory properties. In contrast with other IFNs, IFN-tau is not virally inducible. In Ovis aries (Sheep), this protein is Interferon tau-8 (IFNT8).